We begin with the raw amino-acid sequence, 255 residues long: Phosphoribosyl isomerase A (255 aa).

Asp-21 (proton acceptor) is an active-site residue. Asp-140 serves as the catalytic Proton donor.

Belongs to the HisA/HisF family.

The protein resides in the cytoplasm. The catalysed reaction is 1-(5-phospho-beta-D-ribosyl)-5-[(5-phospho-beta-D-ribosylamino)methylideneamino]imidazole-4-carboxamide = 5-[(5-phospho-1-deoxy-D-ribulos-1-ylimino)methylamino]-1-(5-phospho-beta-D-ribosyl)imidazole-4-carboxamide. It catalyses the reaction N-(5-phospho-beta-D-ribosyl)anthranilate = 1-(2-carboxyphenylamino)-1-deoxy-D-ribulose 5-phosphate. It participates in amino-acid biosynthesis; L-histidine biosynthesis; L-histidine from 5-phospho-alpha-D-ribose 1-diphosphate: step 4/9. Its pathway is amino-acid biosynthesis; L-tryptophan biosynthesis; L-tryptophan from chorismate: step 3/5. Involved in both the histidine and tryptophan biosynthetic pathways. The protein is Phosphoribosyl isomerase A of Mycolicibacterium vanbaalenii (strain DSM 7251 / JCM 13017 / BCRC 16820 / KCTC 9966 / NRRL B-24157 / PYR-1) (Mycobacterium vanbaalenii).